The sequence spans 47 residues: Laccase-2d (47 aa).

Residues 2-47 (TGPVADLHIINKDLSPDGFQRPTVVAGGGRDVVSIGRAGDNVTIRF) enclose the Plastocyanin-like domain.

The protein belongs to the multicopper oxidase family. Homodimer. Cu cation serves as cofactor. Post-translationally, N-glycosylated; contains 17% carbohydrates.

Its subcellular location is the secreted. It catalyses the reaction 4 hydroquinone + O2 = 4 benzosemiquinone + 2 H2O. Its activity is regulated as follows. Inhibited by sodium azide, SDS and mercaptoethanol, but not by 4-hexyl resocinol, L-cysteine and dithiothreitol. Activity is inhibited by the heavy metal ions Cr, W, Sn, Ag(+) and Hg(2+), but not by Pb(2+), Fe(3+), Ni(2+), Li(2+), Co(2+) or Cd(2+). Its function is as follows. Lignin degradation and detoxification of lignin-derived products. Has highest activity towards ABTS, also active towards ferulic acid and guaiacol, but is not active towards tyrosine, vanillic acid, 2,5-dimethyl aniline, p-anisidine or violuric acid. This Cerrena unicolor (Canker rot fungus) protein is Laccase-2d.